The chain runs to 156 residues: MSRRTSAQKRSVNPDPKFNSRLASMMVARLMDSGKKSLAFRILYSAFDLIQERTGNDPLELFEQAVRNATPLVEVRARRVGGATYQVPMEVRSERGTAMALRWLVQYSRQRPGKSMAIKLANELMDAANETGSSVRKREETHKMAEANKAFAHYRY.

It belongs to the universal ribosomal protein uS7 family. In terms of assembly, part of the 30S ribosomal subunit. Contacts proteins S9 and S11.

Functionally, one of the primary rRNA binding proteins, it binds directly to 16S rRNA where it nucleates assembly of the head domain of the 30S subunit. Is located at the subunit interface close to the decoding center, probably blocks exit of the E-site tRNA. In Synechococcus elongatus (strain ATCC 33912 / PCC 7942 / FACHB-805) (Anacystis nidulans R2), this protein is Small ribosomal subunit protein uS7.